The primary structure comprises 339 residues: Tetraacyldisaccharide 4'-kinase (339 aa).

Residue 58 to 65 (TVGGSGKT) participates in ATP binding.

Belongs to the LpxK family.

The catalysed reaction is a lipid A disaccharide + ATP = a lipid IVA + ADP + H(+). It participates in glycolipid biosynthesis; lipid IV(A) biosynthesis; lipid IV(A) from (3R)-3-hydroxytetradecanoyl-[acyl-carrier-protein] and UDP-N-acetyl-alpha-D-glucosamine: step 6/6. Its function is as follows. Transfers the gamma-phosphate of ATP to the 4'-position of a tetraacyldisaccharide 1-phosphate intermediate (termed DS-1-P) to form tetraacyldisaccharide 1,4'-bis-phosphate (lipid IVA). The chain is Tetraacyldisaccharide 4'-kinase from Shewanella baltica (strain OS195).